The sequence spans 359 residues: MVKLFIGNLPREATEQEIRSLFEQYGKVLECDIIKNYGFVHIEDKTAAEDAIRNLHHYKLHGVNINVEASKNKSKASTKLHVGNISPTCTNQELRAKFEEYGPVIECDIVKDYAFVHMERAEDAVEAIRGLDNTEFQGKRMHVQLSTSRLRTAPGMGDQSGCYRCGKEGHWSKECPVDRTGRVADFTEQYNEQYGAVRTPYTMGYGESMYYNDAYGALDYYKRYRVRSYEAVAAAAAASAYNYAEQTMSHLPQVQSTTVTSHLNSTSVDPYDRHLLPNSGAAATSAAMAAAAATTSSYYGRDRSPLRRAAAMLPTVGEGYGYGPESELSQASAATRNSLYDMARYEREQYVDRARYSAF.

RRM domains lie at 2–72 (VKLF…ASKN) and 78–148 (TKLH…LSTS). The CCHC-type zinc finger occupies 160-177 (SGCYRCGKEGHWSKECPV). The tract at residues 196 to 359 (AVRTPYTMGY…YVDRARYSAF (164 aa)) is interaction with TNPO3.

As to quaternary structure, interacts with TNPO3, which may mediate nuclear import of the protein. In terms of tissue distribution, expressed in liver and kidney (at protein level). Ubiquitously expressed.

It is found in the nucleus. The protein resides in the nucleolus. Required for the translational activation of PER1 mRNA in response to circadian clock. Binds directly to the 3'-UTR of the PER1 mRNA. In Homo sapiens (Human), this protein is RNA-binding protein 4B (RBM4B).